Reading from the N-terminus, the 157-residue chain is Ribosome-binding factor A (157 aa).

Positions 124–157 (SAGAQFAGDADPYRKPESDDESDTAAKTDGDAAE) are disordered. Residues 147 to 157 (TAAKTDGDAAE) are compositionally biased toward basic and acidic residues.

It belongs to the RbfA family. As to quaternary structure, monomer. Binds 30S ribosomal subunits, but not 50S ribosomal subunits or 70S ribosomes.

The protein resides in the cytoplasm. Its function is as follows. One of several proteins that assist in the late maturation steps of the functional core of the 30S ribosomal subunit. Associates with free 30S ribosomal subunits (but not with 30S subunits that are part of 70S ribosomes or polysomes). Required for efficient processing of 16S rRNA. May interact with the 5'-terminal helix region of 16S rRNA. In Streptomyces avermitilis (strain ATCC 31267 / DSM 46492 / JCM 5070 / NBRC 14893 / NCIMB 12804 / NRRL 8165 / MA-4680), this protein is Ribosome-binding factor A.